A 266-amino-acid chain; its full sequence is Enterotoxin type C-2 (266 aa).

A signal peptide spans 1–27; the sequence is MNKSRFISCVILIFALILVLFTPNVLA. Residues aspartate 36, histidine 74, glutamate 98, glutamate 107, and aspartate 110 each coordinate Zn(2+). Cysteine 120 and cysteine 137 are joined by a disulfide. Residues histidine 145, glutamate 146, and histidine 149 each contribute to the Zn(2+) site.

This sequence belongs to the staphylococcal/streptococcal toxin family. As to quaternary structure, interacts with host MHC class II molecules composed of alpha/HLA-DRA and beta/HLA-DRB1 chains. It depends on Zn(2+) as a cofactor.

It is found in the secreted. Functionally, staphylococcal enterotoxin that activates the host immune system by binding as unprocessed molecules to major histocompatibility (MHC) complex class II and T-cell receptor (TCR) molecules. In turn, this ternary complex activates a large number of T-lymphocytes initiating a systemic release of pro-inflammatory cytokines. Also causes the intoxication staphylococcal food poisoning syndrome. The polypeptide is Enterotoxin type C-2 (entC2) (Staphylococcus aureus).